The chain runs to 183 residues: Putative manganese efflux pump MntP 1 (183 aa).

Transmembrane regions (helical) follow at residues 6–26, 36–56, 64–84, 100–120, 130–150, and 158–178; these read LFLLALAISLDAFGVILCIGI, MIFVFSFGFFQFFLSFLGGYI, IVPIPTIVGGLIIIIVGILMI, IMYLILGVSVSIDALVIGFTT, LFMSSLFMGLIATIICSLGII, and ISIISSYADYIGGIILILFGL.

It belongs to the MntP (TC 9.B.29) family.

The protein localises to the cell membrane. Functionally, probably functions as a manganese efflux pump. This is Putative manganese efflux pump MntP 1 from Clostridium botulinum (strain Hall / ATCC 3502 / NCTC 13319 / Type A).